The primary structure comprises 284 residues: RNase adapter protein RapZ (284 aa).

Position 8 to 15 (Gly8 to Ser15) interacts with ATP. Residue Asp56–Asn59 participates in GTP binding. The segment at Arg266–Ser284 is RNA-binding.

This sequence belongs to the RapZ-like family. RapZ subfamily. Homotrimer.

Its function is as follows. Modulates the synthesis of GlmS, by affecting the processing and stability of the regulatory small RNA GlmZ. When glucosamine-6-phosphate (GlcN6P) concentrations are high in the cell, RapZ binds GlmZ and targets it to cleavage by RNase E. Consequently, GlmZ is inactivated and unable to activate GlmS synthesis. Under low GlcN6P concentrations, RapZ is sequestered and inactivated by an other regulatory small RNA, GlmY, preventing GlmZ degradation and leading to synthesis of GlmS. The protein is RNase adapter protein RapZ of Sodalis glossinidius (strain morsitans).